The primary structure comprises 43 residues: Large ribosomal subunit protein uL5 (43 aa).

Belongs to the universal ribosomal protein uL5 family. Part of the 50S ribosomal subunit; part of the 5S rRNA/L5/L18/L25 subcomplex. Contacts the 5S rRNA and the P site tRNA. Forms a bridge to the 30S subunit in the 70S ribosome.

Its function is as follows. This is one of the proteins that bind and probably mediate the attachment of the 5S RNA into the large ribosomal subunit, where it forms part of the central protuberance. In the 70S ribosome it contacts protein S13 of the 30S subunit (bridge B1b), connecting the 2 subunits; this bridge is implicated in subunit movement. Contacts the P site tRNA; the 5S rRNA and some of its associated proteins might help stabilize positioning of ribosome-bound tRNAs. This chain is Large ribosomal subunit protein uL5 (rplE), found in Proteus vulgaris.